Reading from the N-terminus, the 125-residue chain is Large ribosomal subunit protein eL32 (125 aa).

Belongs to the eukaryotic ribosomal protein eL32 family.

In Sulfolobus acidocaldarius (strain ATCC 33909 / DSM 639 / JCM 8929 / NBRC 15157 / NCIMB 11770), this protein is Large ribosomal subunit protein eL32 (rpl32e).